Here is a 1317-residue protein sequence, read N- to C-terminus: Immunoglobulin superfamily member 1 (1317 aa).

A signal peptide spans 1–20; it reads MMLRTFTLLLLCIWLNPGMT. Ig-like C2-type domains follow at residues 21-112, 114-211, 216-302, 311-398, and 400-481; these read SLAV…KILE, EAPG…KLVV, PKPT…SDIL, PKTW…ATYN, and VELM…HRSK. The Extracellular portion of the chain corresponds to 21–499; sequence SLAVESQPEL…GFLTWNSILN (479 aa). Asn-43 carries N-linked (GlcNAc...) asparagine glycosylation. A disulfide bridge connects residues Cys-48 and Cys-96. A disulfide bridge connects residues Cys-238 and Cys-286. 2 N-linked (GlcNAc...) asparagine glycosylation sites follow: Asn-328 and Asn-371. 2 cysteine pairs are disulfide-bonded: Cys-333-Cys-382 and Cys-422-Cys-465. The chain crosses the membrane as a helical span at residues 500-520; that stretch reads EAVRVSLTMQLASLLLLVVWI. At 521-531 the chain is on the cytoplasmic side; that stretch reads RWKCRRLRLRE. A helical membrane pass occupies residues 532-552; it reads AWLLGTAQGVAMLFILMALLC. At 553–1317 the chain is on the extracellular side; that stretch reads CGLCNGALTE…EVSVELTVPI (765 aa). Ig-like C2-type domains follow at residues 570–658, 659–753, 758–850, 854–938, 946–1041, 1046–1131, and 1142–1223; these read TPKP…ALEL, VGTD…ELVI, PKPF…LVVT, PKPT…SSLS, TDTF…ELIV, PKPS…NHSN, and PKPS…EPSD. Residues Cys-780 and Cys-830 are joined by a disulfide bond. Asn-871 carries N-linked (GlcNAc...) asparagine glycosylation. Cys-876 and Cys-923 form a disulfide bridge. Asn-967 and Asn-1063 each carry an N-linked (GlcNAc...) asparagine glycan. Intrachain disulfides connect Cys-1068-Cys-1115 and Cys-1164-Cys-1207. The disordered stretch occupies residues 1290–1310; sequence NQEGEPGTTTNSPSSASQEVS. Polar residues predominate over residues 1296-1309; sequence GTTTNSPSSASQEV.

Interacts with INHA; the interaction is not confirmed by standard receptor binding assays. Interacts with ACVR1B; the interaction appears to be ligand-dependent as it is diminished by inhibin B and activin A. Interacts with ACVR2A, ACVR2B, ACVRL1 and BMPR1B. Interacts with HECTD1.

Its subcellular location is the membrane. It is found in the secreted. Seems to be a coreceptor in inhibin signaling, but seems not to be a high-affinity inhibin receptor. Antagonizes activin A signaling in the presence or absence of inhibin B. Necessary to mediate a specific antagonistic effect of inhibin B on activin-stimulated transcription. In Mus musculus (Mouse), this protein is Immunoglobulin superfamily member 1 (Igsf1).